A 340-amino-acid chain; its full sequence is Porphobilinogen deaminase (340 aa).

Cys-258 is modified (S-(dipyrrolylmethanemethyl)cysteine).

Belongs to the HMBS family. Dipyrromethane serves as cofactor.

It carries out the reaction 4 porphobilinogen + H2O = hydroxymethylbilane + 4 NH4(+). It functions in the pathway porphyrin-containing compound metabolism; protoporphyrin-IX biosynthesis; coproporphyrinogen-III from 5-aminolevulinate: step 2/4. In terms of biological role, tetrapolymerization of the monopyrrole PBG into the hydroxymethylbilane pre-uroporphyrinogen in several discrete steps. The chain is Porphobilinogen deaminase (HEM3) from Candida albicans (strain SC5314 / ATCC MYA-2876) (Yeast).